Consider the following 350-residue polypeptide: UDP-N-acetylenolpyruvoylglucosamine reductase (350 aa).

The FAD-binding PCMH-type domain occupies 25–194 (VGPVARRLIT…LDVGGRSAPL (170 aa)). Residue Arg-166 is part of the active site. Residue Ser-243 is the Proton donor of the active site. The active site involves Glu-342.

This sequence belongs to the MurB family. The cofactor is FAD.

It is found in the cytoplasm. It carries out the reaction UDP-N-acetyl-alpha-D-muramate + NADP(+) = UDP-N-acetyl-3-O-(1-carboxyvinyl)-alpha-D-glucosamine + NADPH + H(+). The protein operates within cell wall biogenesis; peptidoglycan biosynthesis. Cell wall formation. The polypeptide is UDP-N-acetylenolpyruvoylglucosamine reductase (Mycobacterium sp. (strain MCS)).